Consider the following 215-residue polypeptide: Cytochrome c biogenesis ATP-binding export protein CcmA (215 aa).

Residues 3 to 215 form the ABC transporter domain; sequence LEAENLAGER…MAAFSVEDIA (213 aa). An ATP-binding site is contributed by 35 to 42; sequence GPNGSGKS.

The protein belongs to the ABC transporter superfamily. CcmA exporter (TC 3.A.1.107) family. In terms of assembly, the complex is composed of two ATP-binding proteins (CcmA) and two transmembrane proteins (CcmB).

The protein resides in the cell inner membrane. It carries out the reaction heme b(in) + ATP + H2O = heme b(out) + ADP + phosphate + H(+). In terms of biological role, part of the ABC transporter complex CcmAB involved in the biogenesis of c-type cytochromes; once thought to export heme, this seems not to be the case, but its exact role is uncertain. Responsible for energy coupling to the transport system. The protein is Cytochrome c biogenesis ATP-binding export protein CcmA of Brucella melitensis biotype 1 (strain ATCC 23456 / CCUG 17765 / NCTC 10094 / 16M).